The sequence spans 309 residues: Homoserine O-succinyltransferase (309 aa).

Residue Cys-142 is the Acyl-thioester intermediate of the active site. Positions 163 and 192 each coordinate substrate. His-235 serves as the catalytic Proton acceptor. The active site involves Glu-237. Arg-249 is a substrate binding site.

The protein belongs to the MetA family.

It localises to the cytoplasm. The catalysed reaction is L-homoserine + succinyl-CoA = O-succinyl-L-homoserine + CoA. It functions in the pathway amino-acid biosynthesis; L-methionine biosynthesis via de novo pathway; O-succinyl-L-homoserine from L-homoserine: step 1/1. Functionally, transfers a succinyl group from succinyl-CoA to L-homoserine, forming succinyl-L-homoserine. The polypeptide is Homoserine O-succinyltransferase (Erwinia tasmaniensis (strain DSM 17950 / CFBP 7177 / CIP 109463 / NCPPB 4357 / Et1/99)).